We begin with the raw amino-acid sequence, 421 residues long: Medium-chain specific acyl-CoA dehydrogenase, mitochondrial (421 aa).

The N-terminal 25 residues, 1 to 25 (MAAGFGRCCRVLRSISRFHWRSQHT), are a transit peptide targeting the mitochondrion. Position 69 is an N6-acetyllysine; alternate (Lys69). Lys69 carries the N6-succinyllysine; alternate modification. 158–167 (YCVTEPGAGS) contacts FAD. Ser167 serves as a coordination point for octanoyl-CoA. Lys179 carries the post-translational modification N6-succinyllysine. 191 to 193 (WIT) provides a ligand contact to FAD. 4 positions are modified to N6-acetyllysine; alternate: Lys212, Lys217, Lys259, and Lys271. 4 positions are modified to N6-succinyllysine; alternate: Lys212, Lys217, Lys259, and Lys271. Asp278 is an octanoyl-CoA binding site. Lys279 carries the post-translational modification N6-acetyllysine. Arg281 is a binding site for octanoyl-CoA. N6-acetyllysine is present on Lys301. Residues 306–308 (RKT) and 316–317 (HQ) each bind FAD. Thr351 carries the post-translational modification Phosphothreonine. Residues 374 to 378 (QILGG) and 401 to 405 (EGTSQ) contribute to the FAD site. Residue Glu401 participates in octanoyl-CoA binding. Glu401 (proton acceptor) is an active-site residue.

Belongs to the acyl-CoA dehydrogenase family. In terms of assembly, homotetramer. Interacts with the heterodimeric electron transfer flavoprotein ETF. FAD is required as a cofactor. In terms of processing, acetylated. Could occur at proximity of the cofactor-binding sites and reduce the catalytic activity. Could be deacetylated by SIRT3.

Its subcellular location is the mitochondrion matrix. The enzyme catalyses a medium-chain 2,3-saturated fatty acyl-CoA + oxidized [electron-transfer flavoprotein] + H(+) = a medium-chain (2E)-enoyl-CoA + reduced [electron-transfer flavoprotein]. The catalysed reaction is pentanoyl-CoA + oxidized [electron-transfer flavoprotein] + H(+) = (2E)-pentenoyl-CoA + reduced [electron-transfer flavoprotein]. It catalyses the reaction hexanoyl-CoA + oxidized [electron-transfer flavoprotein] + H(+) = (2E)-hexenoyl-CoA + reduced [electron-transfer flavoprotein]. It carries out the reaction octanoyl-CoA + oxidized [electron-transfer flavoprotein] + H(+) = (2E)-octenoyl-CoA + reduced [electron-transfer flavoprotein]. The enzyme catalyses decanoyl-CoA + oxidized [electron-transfer flavoprotein] + H(+) = (2E)-decenoyl-CoA + reduced [electron-transfer flavoprotein]. The catalysed reaction is dodecanoyl-CoA + oxidized [electron-transfer flavoprotein] + H(+) = (2E)-dodecenoyl-CoA + reduced [electron-transfer flavoprotein]. It catalyses the reaction tetradecanoyl-CoA + oxidized [electron-transfer flavoprotein] + H(+) = (2E)-tetradecenoyl-CoA + reduced [electron-transfer flavoprotein]. It carries out the reaction oxidized [electron-transfer flavoprotein] + hexadecanoyl-CoA + H(+) = (2E)-hexadecenoyl-CoA + reduced [electron-transfer flavoprotein]. It participates in lipid metabolism; mitochondrial fatty acid beta-oxidation. Functionally, medium-chain specific acyl-CoA dehydrogenase is one of the acyl-CoA dehydrogenases that catalyze the first step of mitochondrial fatty acid beta-oxidation, an aerobic process breaking down fatty acids into acetyl-CoA and allowing the production of energy from fats. The first step of fatty acid beta-oxidation consists in the removal of one hydrogen from C-2 and C-3 of the straight-chain fatty acyl-CoA thioester, resulting in the formation of trans-2-enoyl-CoA. Electron transfer flavoprotein (ETF) is the electron acceptor that transfers electrons to the main mitochondrial respiratory chain via ETF-ubiquinone oxidoreductase (ETF dehydrogenase). Among the different mitochondrial acyl-CoA dehydrogenases, medium-chain specific acyl-CoA dehydrogenase acts specifically on acyl-CoAs with saturated 6 to 12 carbons long primary chains. This is Medium-chain specific acyl-CoA dehydrogenase, mitochondrial from Homo sapiens (Human).